A 1101-amino-acid chain; its full sequence is Furin-like protease 1, isoform 1-CRR (1101 aa).

Positions 1–57 are disordered; it reads MKNDVVRWSRQPTSNTTNSSSSSRSDSNSTHKHRSKSNKLNARQLGSNAARSCQQRS. Over residues 13 to 28 the composition is skewed to low complexity; that stretch reads TSNTTNSSSSSRSDSN. Residues asparagine 15, asparagine 18, and asparagine 28 are each glycosylated (N-linked (GlcNAc...) asparagine). Residues 38 to 57 show a composition bias toward polar residues; sequence NKLNARQLGSNAARSCQQRS. Asparagine 108 is a glycosylation site (N-linked (GlcNAc...) asparagine). A helical membrane pass occupies residues 119–139; it reads VFLLALQFSAVVFLCNINVGF. The segment covering 150–163 has biased composition (low complexity); that stretch reads SAGGSSPAAPSSAP. The disordered stretch occupies residues 150–187; sequence SAGGSSPAAPSSAPSSPPTVAVPPPPPPSSALKVDPNG. The segment covering 164-178 has biased composition (pro residues); it reads SSPPTVAVPPPPPPS. Residue asparagine 333 is glycosylated (N-linked (GlcNAc...) asparagine). One can recognise a Peptidase S8 domain in the interval 340-654; sequence MWYLNRGGGL…YGLMDAAEMV (315 aa). Residues aspartate 372 and histidine 413 each act as charge relay system in the active site. A glycan (N-linked (GlcNAc...) asparagine) is linked at asparagine 426. 2 cysteine pairs are disulfide-bonded: cysteine 430–cysteine 579 and cysteine 522–cysteine 552. The active-site Charge relay system is the serine 587. The N-linked (GlcNAc...) asparagine glycan is linked to asparagine 606. A P/Homo B domain is found at 662–791; the sequence is AVPEQQRCEI…DMIFYGTETP (130 aa). A disulfide bond links cysteine 669 and cysteine 695. N-linked (GlcNAc...) asparagine glycans are attached at residues asparagine 727 and asparagine 859. Positions 886-915 are disordered; that stretch reads EEDEQDDEVTRGPVNPYSSSPMDHSLLMSN. Residues 901-915 are compositionally biased toward polar residues; sequence PYSSSPMDHSLLMSN. N-linked (GlcNAc...) asparagine glycosylation is present at asparagine 978. The helical transmembrane segment at 1014-1034 threads the bilayer; sequence TVLLLVSVIFTLMGVAVAGGI.

The protein belongs to the peptidase S8 family. Furin subfamily. Ca(2+) is required as a cofactor. In terms of tissue distribution, in adults, isoform 1-CRR is expressed in CNS, fat body, and female reproductive tissues, and in embryos, in anal pads, hindgut, developing antennomaxillary complex, oenocytes, clipeolabrum, pharynx, trachea, CNS and developing posterior spiracles.

It is found in the golgi apparatus membrane. It catalyses the reaction Release of mature proteins from their proproteins by cleavage of -Arg-Xaa-Yaa-Arg-|-Zaa- bonds, where Xaa can be any amino acid and Yaa is Arg or Lys. Releases albumin, complement component C3 and von Willebrand factor from their respective precursors.. Functionally, furin is likely to represent the ubiquitous endoprotease activity within constitutive secretory pathways and capable of cleavage at the RX(K/R)R consensus motif. The sequence is that of Furin-like protease 1, isoform 1-CRR (Fur1) from Drosophila melanogaster (Fruit fly).